The chain runs to 308 residues: Porphobilinogen deaminase (308 aa).

Position 240 is an S-(dipyrrolylmethanemethyl)cysteine (Cys240).

It belongs to the HMBS family. In terms of assembly, monomer. The cofactor is dipyrromethane.

The catalysed reaction is 4 porphobilinogen + H2O = hydroxymethylbilane + 4 NH4(+). The protein operates within porphyrin-containing compound metabolism; protoporphyrin-IX biosynthesis; coproporphyrinogen-III from 5-aminolevulinate: step 2/4. Tetrapolymerization of the monopyrrole PBG into the hydroxymethylbilane pre-uroporphyrinogen in several discrete steps. The polypeptide is Porphobilinogen deaminase (Maridesulfovibrio salexigens (strain ATCC 14822 / DSM 2638 / NCIMB 8403 / VKM B-1763) (Desulfovibrio salexigens)).